The following is a 294-amino-acid chain: Phosphatidylglycerol--prolipoprotein diacylglyceryl transferase (294 aa).

7 helical membrane passes run 10-30, 55-75, 91-111, 119-139, 196-216, 224-244, and 258-278; these read VALA…LLAF, LVFY…VLFY, WEGG…MWFF, AFQV…FGRI, PSQL…LWWY, MAAS…IEFF, and WMTK…IMLI. A 1,2-diacyl-sn-glycero-3-phospho-(1'-sn-glycerol) is bound at residue R138.

Belongs to the Lgt family.

Its subcellular location is the cell inner membrane. It carries out the reaction L-cysteinyl-[prolipoprotein] + a 1,2-diacyl-sn-glycero-3-phospho-(1'-sn-glycerol) = an S-1,2-diacyl-sn-glyceryl-L-cysteinyl-[prolipoprotein] + sn-glycerol 1-phosphate + H(+). It participates in protein modification; lipoprotein biosynthesis (diacylglyceryl transfer). In terms of biological role, catalyzes the transfer of the diacylglyceryl group from phosphatidylglycerol to the sulfhydryl group of the N-terminal cysteine of a prolipoprotein, the first step in the formation of mature lipoproteins. The chain is Phosphatidylglycerol--prolipoprotein diacylglyceryl transferase from Psychrobacter arcticus (strain DSM 17307 / VKM B-2377 / 273-4).